Consider the following 170-residue polypeptide: Adenine phosphoribosyltransferase (170 aa).

This sequence belongs to the purine/pyrimidine phosphoribosyltransferase family. In terms of assembly, homodimer.

The protein resides in the cytoplasm. The catalysed reaction is AMP + diphosphate = 5-phospho-alpha-D-ribose 1-diphosphate + adenine. The protein operates within purine metabolism; AMP biosynthesis via salvage pathway; AMP from adenine: step 1/1. In terms of biological role, catalyzes a salvage reaction resulting in the formation of AMP, that is energically less costly than de novo synthesis. The polypeptide is Adenine phosphoribosyltransferase (Thermosynechococcus vestitus (strain NIES-2133 / IAM M-273 / BP-1)).